The following is a 64-amino-acid chain: UPF0337 protein SH2043 (64 aa).

Residues 1–64 (MAEDKFEQAK…DKVKGNNDNK (64 aa)) form a disordered region. Positions 22–64 (DNKDLEKEGQNDKASGKAKEAVENVKNKANDLIDKVKGNNDNK) are enriched in basic and acidic residues.

It belongs to the UPF0337 (CsbD) family.

The protein is UPF0337 protein SH2043 of Staphylococcus haemolyticus (strain JCSC1435).